The following is a 278-amino-acid chain: Sulfur carrier protein FdhD (278 aa).

Cys121 (cysteine persulfide intermediate) is an active-site residue. 260 to 265 (FCKPGR) provides a ligand contact to Mo-bis(molybdopterin guanine dinucleotide).

The protein belongs to the FdhD family.

The protein localises to the cytoplasm. Its function is as follows. Required for formate dehydrogenase (FDH) activity. Acts as a sulfur carrier protein that transfers sulfur from IscS to the molybdenum cofactor prior to its insertion into FDH. This Salmonella heidelberg (strain SL476) protein is Sulfur carrier protein FdhD.